Here is a 283-residue protein sequence, read N- to C-terminus: Pantothenate synthetase (283 aa).

Residue 30–37 participates in ATP binding; it reads MGTLHDGH. The active-site Proton donor is the histidine 37. A (R)-pantoate-binding site is contributed by glutamine 61. Glutamine 61 contacts beta-alanine. 148 to 151 lines the ATP pocket; that stretch reads GLKD. Glutamine 154 serves as a coordination point for (R)-pantoate. Residue 185-188 participates in ATP binding; it reads MSSR.

The protein belongs to the pantothenate synthetase family. Homodimer.

The protein localises to the cytoplasm. It catalyses the reaction (R)-pantoate + beta-alanine + ATP = (R)-pantothenate + AMP + diphosphate + H(+). The protein operates within cofactor biosynthesis; (R)-pantothenate biosynthesis; (R)-pantothenate from (R)-pantoate and beta-alanine: step 1/1. Its function is as follows. Catalyzes the condensation of pantoate with beta-alanine in an ATP-dependent reaction via a pantoyl-adenylate intermediate. The polypeptide is Pantothenate synthetase (Leptospira biflexa serovar Patoc (strain Patoc 1 / Ames)).